An 83-amino-acid chain; its full sequence is Small ribosomal subunit protein uS17 (83 aa).

This sequence belongs to the universal ribosomal protein uS17 family. In terms of assembly, part of the 30S ribosomal subunit.

Functionally, one of the primary rRNA binding proteins, it binds specifically to the 5'-end of 16S ribosomal RNA. In Synechococcus sp. (strain RCC307), this protein is Small ribosomal subunit protein uS17.